The chain runs to 363 residues: Cinnamyl alcohol dehydrogenase 2 (363 aa).

Cys-47 serves as a coordination point for Zn(2+). Thr-49 provides a ligand contact to NADP(+). Residues His-69, Glu-70, Cys-100, Cys-103, Cys-106, Cys-114, and Cys-163 each coordinate Zn(2+). NADP(+)-binding positions include Thr-167, Gly-188–Gly-193, Ser-211–Lys-216, Thr-251, Gly-275, and Ser-298–Ile-300.

The protein belongs to the zinc-containing alcohol dehydrogenase family. In terms of assembly, homodimer. Requires Zn(2+) as cofactor. As to expression, expressed in roots behind the root tips in the pericycle region and layer of cortical cells adjacent to the exodermis. Expressed in vascular bundles and lateral veins of leaf sheaths and blades. Expressed in the vicinity of vascular bundles in the first internode below the inflorescence. Highly expressed in the culm.

It carries out the reaction (E)-cinnamyl alcohol + NADP(+) = (E)-cinnamaldehyde + NADPH + H(+). It catalyses the reaction (E)-coniferol + NADP(+) = (E)-coniferaldehyde + NADPH + H(+). The catalysed reaction is (E)-sinapyl alcohol + NADP(+) = (E)-sinapaldehyde + NADPH + H(+). The enzyme catalyses (E)-4-coumaroyl alcohol + NADP(+) = (E)-4-coumaraldehyde + NADPH + H(+). It carries out the reaction (E)-caffeyl alcohol + NADP(+) = (E)-caffeyl aldehyde + NADPH + H(+). The protein operates within aromatic compound metabolism; phenylpropanoid biosynthesis. In terms of biological role, involved in lignin biosynthesis. Catalyzes the final step specific for the production of lignin monomers. Catalyzes the NADPH-dependent reduction of coniferaldehyde and sinapaldehyde to their respective alcohols. Plays the major role in monolignol biosynthesis. Functions cooperatively with COMT in the culm internodes for the biosynthesis of monolignols, the lignin precursors. May be involved in lignin biosynthesis in leaves and roots. In Oryza sativa subsp. japonica (Rice), this protein is Cinnamyl alcohol dehydrogenase 2.